We begin with the raw amino-acid sequence, 81 residues long: Acyl carrier protein (81 aa).

The Carrier domain maps to 2-80; that stretch reads ASKDEILAGL…DAVNFIDNAQ (79 aa). S40 carries the O-(pantetheine 4'-phosphoryl)serine modification.

The protein belongs to the acyl carrier protein (ACP) family. Post-translationally, 4'-phosphopantetheine is transferred from CoA to a specific serine of apo-ACP by AcpS. This modification is essential for activity because fatty acids are bound in thioester linkage to the sulfhydryl of the prosthetic group.

Its subcellular location is the cytoplasm. Its pathway is lipid metabolism; fatty acid biosynthesis. Its function is as follows. Carrier of the growing fatty acid chain in fatty acid biosynthesis. In Kocuria rhizophila (strain ATCC 9341 / DSM 348 / NBRC 103217 / DC2201), this protein is Acyl carrier protein.